Here is a 327-residue protein sequence, read N- to C-terminus: Small ribosomal subunit protein uS2 (327 aa).

The disordered stretch occupies residues 258 to 327 (AGHTPVSETL…PGVADGAALE (70 aa)).

It belongs to the universal ribosomal protein uS2 family.

This Anaplasma marginale (strain St. Maries) protein is Small ribosomal subunit protein uS2.